The primary structure comprises 642 residues: Hemagglutinin-esterase-fusion glycoprotein (642 aa).

Residue Ala1 is a signal peptide. The interval 2 to 27 is fusion domain-1; sequence EKIKICLQKQANSSFSLHNGFGGNLY. Residues 2–617 lie on the Extracellular side of the membrane; it reads EKIKICLQKQ…QSDPFYWGSS (616 aa). 7 cysteine pairs are disulfide-bonded: Cys7–Cys570, Cys107–Cys152, Cys127–Cys175, Cys197–Cys239, Cys216–Cys303, Cys224–Cys276, and Cys333–Cys339. Asn13 and Asn48 each carry an N-linked (GlcNAc...) asparagine; by host glycan. Residues 28-138 form an esterase domain-1 region; the sequence is ATEEKRMFEL…RKNWTDIKLN (111 aa). Ser58 (nucleophile) is an active-site residue. N-linked (GlcNAc...) asparagine; by host glycosylation is present at Asn131. The interval 138–297 is N-acetyl-9-O-acetylneuraminic acid binding; it reads NFQKNIYELA…VRSSPRFLLM (160 aa). The segment at 298–352 is esterase domain-2; sequence PERSYCFDMKEKGLVTAVQSVWGKGRKSDYAVDQACLSTPGCMLIQKQKPYIGEA. Residues Asp353 and His356 each act as charge relay system in the active site. A fusion domain-2 region spans residues 353–638; sequence DDHHGDQEMR…AALAISGIAI (286 aa). N-linked (GlcNAc...) asparagine; by host glycosylation occurs at Asn382. The helical transmembrane segment at 618–638 threads the bilayer; it reads LGLAITTPISLAALAISGIAI. Topologically, residues 639 to 642 are cytoplasmic; sequence CRTK.

It belongs to the influenza type C/coronaviruses hemagglutinin-esterase family. As to quaternary structure, homotrimer of disulfide-linked HEF1-HEF2. In terms of processing, in natural infection, inactive HEF is matured into HEF1 and HEF2 outside the cell by one or more trypsin-like, arginine-specific endoprotease.

Its subcellular location is the virion membrane. The protein localises to the host cell membrane. It carries out the reaction N-acetyl-9-O-acetylneuraminate + H2O = N-acetylneuraminate + acetate + H(+). The enzyme catalyses N-acetyl-4-O-acetylneuraminate + H2O = N-acetylneuraminate + acetate + H(+). Functionally, binds to the N-acetyl-9-O-acetylneuraminic acid residues on the cell surface, bringing about the attachment of the virus particle to the cell. Plays a major role in the determination of host range restriction and virulence. Class I viral fusion protein. Responsible for penetration of the virus into the cell cytoplasm by mediating the fusion of the membrane of the endocytosed virus particle with the endosomal membrane. Low pH in endosomes induce an irreversible conformational change in HEF2, releasing the fusion hydrophobic peptide. Several trimers are required to form a competent fusion pore. Displays a receptor-destroying activity which is a neuraminidate-O-acetyl esterase. This activity cleaves off any receptor on the cell surface, which would otherwise prevent virions release. These cleavages prevent self-aggregation and ensure the efficient spread of the progeny virus from cell to cell. The chain is Hemagglutinin-esterase-fusion glycoprotein (HE) from Influenza C virus (strain C/Great lakes/1167/1954).